A 48-amino-acid polypeptide reads, in one-letter code: uncharacterized protein (48 aa).

Its subcellular location is the mitochondrion. This is an uncharacterized protein from Emericella nidulans (Aspergillus nidulans).